The chain runs to 288 residues: 33 kDa chaperonin (288 aa).

Disulfide bonds link C225/C227 and C258/C261.

Belongs to the HSP33 family. Post-translationally, under oxidizing conditions two disulfide bonds are formed involving the reactive cysteines. Under reducing conditions zinc is bound to the reactive cysteines and the protein is inactive.

It is found in the cytoplasm. Redox regulated molecular chaperone. Protects both thermally unfolding and oxidatively damaged proteins from irreversible aggregation. Plays an important role in the bacterial defense system toward oxidative stress. In Shewanella denitrificans (strain OS217 / ATCC BAA-1090 / DSM 15013), this protein is 33 kDa chaperonin.